Reading from the N-terminus, the 332-residue chain is Ornithine carbamoyltransferase 1, catabolic (332 aa).

Carbamoyl phosphate contacts are provided by residues 56 to 59 (STRT), glutamine 83, arginine 107, and 134 to 137 (HPTQ). Residues asparagine 167, aspartate 231, and 235-236 (SM) contribute to the L-ornithine site. Carbamoyl phosphate contacts are provided by residues 273–274 (CL) and arginine 318.

Belongs to the aspartate/ornithine carbamoyltransferase superfamily. OTCase family.

It is found in the cytoplasm. It carries out the reaction carbamoyl phosphate + L-ornithine = L-citrulline + phosphate + H(+). The protein operates within amino-acid degradation; L-arginine degradation via ADI pathway; carbamoyl phosphate from L-arginine: step 2/2. Functionally, reversibly catalyzes the transfer of the carbamoyl group from carbamoyl phosphate (CP) to the N(epsilon) atom of ornithine (ORN) to produce L-citrulline. This Streptococcus agalactiae serotype III (strain NEM316) protein is Ornithine carbamoyltransferase 1, catabolic (arcB1).